Consider the following 624-residue polypeptide: Mannosyl-oligosaccharide 1,2-alpha-mannosidase MNS3 (624 aa).

At 1–43 the chain is on the cytoplasmic side; the sequence is MSKSLPYSVKDIHYDNAKFRHRSPLKVFSQSLLTLSTKRNYAS. The helical; Signal-anchor for type II membrane protein transmembrane segment at 44-64 threads the bilayer; sequence CSTGKFLILILFFGVACLMLM. The Lumenal portion of the chain corresponds to 65–624; it reads SKSPNESGLN…AHPLPIRRNT (560 aa). N-linked (GlcNAc...) asparagine glycosylation is found at Asn-69 and Asn-114. Residues 91–123 are disordered; the sequence is LRKPPRLPPRLSPDEGQLRGSSTNGSTISNSDP. Residues 110–121 are compositionally biased toward low complexity; that stretch reads GSSTNGSTISNS. The active-site Proton donor is the Glu-212. Residue Asn-236 is glycosylated (N-linked (GlcNAc...) asparagine). The active site involves Asp-357. Residue Asn-377 is glycosylated (N-linked (GlcNAc...) asparagine). The cysteines at positions 428 and 471 are disulfide-linked. Residue Glu-485 is the Proton donor of the active site. N-linked (GlcNAc...) asparagine glycosylation is present at Asn-503. The active site involves Glu-526. Thr-613 contacts Ca(2+).

This sequence belongs to the glycosyl hydrolase 47 family. It depends on Ca(2+) as a cofactor. Mn(2+) is required as a cofactor. The cofactor is Mg(2+). As to expression, expressed in flowers, siliques, stems, leaves, roots, stamens and sepals.

The protein resides in the golgi apparatus. It is found in the cis-Golgi network membrane. The enzyme catalyses N(4)-(alpha-D-Man-(1-&gt;2)-alpha-D-Man-(1-&gt;2)-alpha-D-Man-(1-&gt;3)-[alpha-D-Man-(1-&gt;2)-alpha-D-Man-(1-&gt;3)-[alpha-D-Man-(1-&gt;2)-alpha-D-Man-(1-&gt;6)]-alpha-D-Man-(1-&gt;6)]-beta-D-Man-(1-&gt;4)-beta-D-GlcNAc-(1-&gt;4)-beta-D-GlcNAc)-L-asparaginyl-[protein] (N-glucan mannose isomer 9A1,2,3B1,2,3) + 4 H2O = N(4)-(alpha-D-Man-(1-&gt;3)-[alpha-D-Man-(1-&gt;3)-[alpha-D-Man-(1-&gt;6)]-alpha-D-Man-(1-&gt;6)]-beta-D-Man-(1-&gt;4)-beta-D-GlcNAc-(1-&gt;4)-beta-D-GlcNAc)-L-asparaginyl-[protein] (N-glucan mannose isomer 5A1,2) + 4 beta-D-mannose. The catalysed reaction is N(4)-(alpha-D-Man-(1-&gt;2)-alpha-D-Man-(1-&gt;2)-alpha-D-Man-(1-&gt;3)-[alpha-D-Man-(1-&gt;3)-[alpha-D-Man-(1-&gt;2)-alpha-D-Man-(1-&gt;6)]-alpha-D-Man-(1-&gt;6)]-beta-D-Man-(1-&gt;4)-beta-D-GlcNAc-(1-&gt;4)-beta-D-GlcNAc)-L-asparaginyl-[protein] (N-glucan mannose isomer 8A1,2,3B1,3) + 3 H2O = N(4)-(alpha-D-Man-(1-&gt;3)-[alpha-D-Man-(1-&gt;3)-[alpha-D-Man-(1-&gt;6)]-alpha-D-Man-(1-&gt;6)]-beta-D-Man-(1-&gt;4)-beta-D-GlcNAc-(1-&gt;4)-beta-D-GlcNAc)-L-asparaginyl-[protein] (N-glucan mannose isomer 5A1,2) + 3 beta-D-mannose. It catalyses the reaction N(4)-(alpha-D-Man-(1-&gt;2)-alpha-D-Man-(1-&gt;2)-alpha-D-Man-(1-&gt;3)-[alpha-D-Man-(1-&gt;2)-alpha-D-Man-(1-&gt;3)-[alpha-D-Man-(1-&gt;2)-alpha-D-Man-(1-&gt;6)]-alpha-D-Man-(1-&gt;6)]-beta-D-Man-(1-&gt;4)-beta-D-GlcNAc-(1-&gt;4)-beta-D-GlcNAc)-L-asparaginyl-[protein] (N-glucan mannose isomer 9A1,2,3B1,2,3) + H2O = N(4)-(alpha-D-Man-(1-&gt;2)-alpha-D-Man-(1-&gt;2)-alpha-D-Man-(1-&gt;3)-[alpha-D-Man-(1-&gt;3)-[alpha-D-Man-(1-&gt;2)-alpha-D-Man-(1-&gt;6)]-alpha-D-Man-(1-&gt;6)]-beta-D-Man-(1-&gt;4)-beta-D-GlcNAc-(1-&gt;4)-beta-D-GlcNAc)-L-asparaginyl-[protein] (N-glucan mannose isomer 8A1,2,3B1,3) + beta-D-mannose. It functions in the pathway protein modification; protein glycosylation. Its activity is regulated as follows. Inhibited by kifunensine and 1-deoxymannojirimycin, but not by swainsonine. Class I alpha-mannosidase essential for early N-glycan processing. Removes preferentially alpha-1,2-linked mannose residues from Man(9)GlcNAc(2) to produce Man(8)GlcNAc(2). Involved in root development and cell wall biosynthesis. This chain is Mannosyl-oligosaccharide 1,2-alpha-mannosidase MNS3 (MNS3), found in Arabidopsis thaliana (Mouse-ear cress).